A 70-amino-acid chain; its full sequence is Conotoxin ArMKLT2-0111 (70 aa).

A signal peptide spans 1-22; that stretch reads MKLTCVLIIAVLFLTACQLTTG. Residues 23-40 constitute a propeptide that is removed on maturation; sequence EQKDHALRSTDKNSKLTR. Glutamine 41 is subject to Pyrrolidone carboxylic acid. 3 cysteine pairs are disulfide-bonded: cysteine 42/cysteine 56, cysteine 49/cysteine 60, and cysteine 55/cysteine 67.

Belongs to the conotoxin O1 superfamily. Expressed by the venom duct.

The protein resides in the secreted. This chain is Conotoxin ArMKLT2-0111, found in Conus arenatus (Sand-dusted cone).